The primary structure comprises 309 residues: Tagatose-6-phosphate kinase (309 aa).

The protein belongs to the carbohydrate kinase PfkB family. LacC subfamily.

It catalyses the reaction D-tagatofuranose 6-phosphate + ATP = D-tagatofuranose 1,6-bisphosphate + ADP + H(+). It participates in carbohydrate metabolism; D-tagatose 6-phosphate degradation; D-glyceraldehyde 3-phosphate and glycerone phosphate from D-tagatose 6-phosphate: step 1/2. The polypeptide is Tagatose-6-phosphate kinase (Streptococcus pyogenes serotype M2 (strain MGAS10270)).